The sequence spans 300 residues: Haloalkane dehalogenase (300 aa).

The AB hydrolase-1 domain occupies 32 to 155; the sequence is AIVFQHGNPT…PAVRGVFQGF (124 aa). The active-site Nucleophile is Asp-109. Glu-133 acts as the Proton donor in catalysis. His-273 serves as the catalytic Proton acceptor.

It belongs to the haloalkane dehalogenase family. Type 2 subfamily. As to quaternary structure, monomer.

The enzyme catalyses 1-haloalkane + H2O = a halide anion + a primary alcohol + H(+). In terms of biological role, catalyzes hydrolytic cleavage of carbon-halogen bonds in halogenated aliphatic compounds, leading to the formation of the corresponding primary alcohols, halide ions and protons. In Mycobacterium bovis (strain BCG / Pasteur 1173P2), this protein is Haloalkane dehalogenase.